Reading from the N-terminus, the 423-residue chain is Glycine amidinotransferase, mitochondrial (423 aa).

A mitochondrion-targeting transit peptide spans 1–43 (MLRVRCLRGGSRGAEAVHYIGSRLGGSLTGWVQRTFQSTQAAT). A phosphoserine mark is found at S46 and S49. D170 is a binding site for arginine. Catalysis depends on residues D254 and H303. 4 residues coordinate arginine: D305, R322, S354, and S355. K385 bears the N6-acetyllysine mark. C407 (amidino-cysteine intermediate) is an active-site residue.

It belongs to the amidinotransferase family. As to quaternary structure, homodimer. Highly expressed in the kidney and pancreas, especially in the proximal tubules of the kidney, and alpha cells of the pancreatic islets (at protein level). Moderately expressed in liver hepatocytes (at protein level). Expressed in the kidney, pancreas, liver, colon, ileum, jejunum, heart and skeletal muscle. In reproductive tissues, expressed in the testis, epididymis, ovary, oviduct and uterus. Expressed throughout the brain in neurons, astrocytes and oligodendrocytes. In 12.5 dpc embryos, it is expressed in the middle part of the somites, hepatic primordium and wall of the dorsal aorta. Expressed in 15.5 dpc embryos in isolated cells throughout the central nervous system, skeletal muscles, gonad primordia, caudal somites, liver and pancreas, but not in the choroid plexus, root ganglia or kidney. Expressed in skeletal muscle, kidney, pancreas, central nervous system, liver and intestine epithelial cells, but not in epidermis, dermis, olfactory epithelium, trachea, lung, stomach or heart in 18.5 dpc embryos.

The protein localises to the mitochondrion inner membrane. The catalysed reaction is L-arginine + glycine = guanidinoacetate + L-ornithine. It carries out the reaction 4-aminobutanoate + L-arginine = 4-guanidinobutanoate + L-ornithine. It catalyses the reaction beta-alanine + L-arginine = 3-guanidinopropanoate + L-ornithine. The enzyme catalyses taurine + L-arginine = taurocyamine + L-ornithine. It functions in the pathway amine and polyamine biosynthesis; creatine biosynthesis; creatine from L-arginine and glycine: step 1/2. Transamidinase that catalyzes the transfer of the amidino group of L-arginine onto the amino moiety of acceptor metabolites such as glycine, beta-alanine, gamma-aminobutyric acid (GABA) and taurine yielding the corresponding guanidine derivatives. Catalyzes the rate-limiting step of creatine biosynthesis, namely the transfer of the amidino group from L-arginine to glycine to generate guanidinoacetate, which is then methylated by GAMT to form creatine. Provides creatine as a source for ATP generation in tissues with high energy demands, in particular skeletal muscle, heart and brain. This Rattus norvegicus (Rat) protein is Glycine amidinotransferase, mitochondrial (Gatm).